The following is a 135-amino-acid chain: MMLESLARVFKVQLPAYLKRLPIPDSIAGFIRLTVLEWLRLLPFLGVLALLGYLAIRPFLPKKKQQKDSLINLKIQKENPKVVNEINIEDLHLAKAAYCRCWRSKTFPVCDGSHNKHNELTGDNVGPLILKKKEV.

The Lumenal portion of the chain corresponds to 1–37 (MMLESLARVFKVQLPAYLKRLPIPDSIAGFIRLTVLE). A helical membrane pass occupies residues 38-60 (WLRLLPFLGVLALLGYLAIRPFL). Residues 61 to 135 (PKKKQQKDSL…GPLILKKKEV (75 aa)) lie on the Cytoplasmic side of the membrane. Cysteine 99, cysteine 101, cysteine 110, and histidine 114 together coordinate [2Fe-2S] cluster.

It belongs to the CISD protein family. CISD2 subfamily. As to quaternary structure, homodimer. It depends on [2Fe-2S] cluster as a cofactor.

The protein localises to the endoplasmic reticulum membrane. It localises to the mitochondrion outer membrane. In terms of biological role, regulator of autophagy that contributes to antagonize becn1-mediated cellular autophagy at the endoplasmic reticulum. Participates in the interaction of bcl2 with becn1 and is required for bcl2-mediated depression of endoplasmic reticulum Ca(2+) stores during autophagy. This Xenopus laevis (African clawed frog) protein is CDGSH iron-sulfur domain-containing protein 2B (cisd2-b).